The primary structure comprises 162 residues: Ribose-5-phosphate isomerase B (162 aa).

Residues 11 to 12 (DH) and 70 to 74 (GSGNG) contribute to the D-ribulose 5-phosphate site. Residue E75 is the Proton acceptor of the active site. Residue H102 is the Proton donor of the active site. D-ribulose 5-phosphate contacts are provided by N103, R113, R137, and R141.

The protein belongs to the LacAB/RpiB family. Homodimer.

It carries out the reaction aldehydo-D-ribose 5-phosphate = D-ribulose 5-phosphate. It functions in the pathway carbohydrate degradation; pentose phosphate pathway; D-ribose 5-phosphate from D-ribulose 5-phosphate (non-oxidative stage): step 1/1. Catalyzes the interconversion of ribulose-5-P and ribose-5-P. This chain is Ribose-5-phosphate isomerase B, found in Mycobacterium bovis (strain ATCC BAA-935 / AF2122/97).